Here is a 160-residue protein sequence, read N- to C-terminus: Small ribosomal subunit protein uS7 (160 aa).

The protein belongs to the universal ribosomal protein uS7 family. As to quaternary structure, part of the 30S ribosomal subunit. Contacts proteins S9 and S11.

Its function is as follows. One of the primary rRNA binding proteins, it binds directly to 16S rRNA where it nucleates assembly of the head domain of the 30S subunit. Is located at the subunit interface close to the decoding center, probably blocks exit of the E-site tRNA. The polypeptide is Small ribosomal subunit protein uS7 (Hydrogenobaculum sp. (strain Y04AAS1)).